The sequence spans 429 residues: MTAITNIAAREILDSRGNPTVEVDVLLEDGSFGRAAVPSGASTGAHEAVELRDGDKSRYNGKGVLKAVDAVQSEILDAIGGMDAEDQVAVDEAMIALDGTPNKARLGANAILGVSLAVAKAAAETAGLPLYRYVGGVQGRVLPVPMMNIVNGGAHADNPIDFQEFMVMPVGATSLSDAVRMGAEIFHTLKSALKKAGHNTNVGDEGGFAPNLPSAEAALDFVMESINAAGFKPGSDVVLALDCAATEFFKDGAYRYEGEGQTRSIEQQVDYLAKLTEAYPILSIEDGMSEDDWDGWKLLTDRIGSRVQLVGDDLFVTNVERLARGIETGTANSILVKVNQIGSLTETLAAVDMAQRAGYTAVMSHRSGETEDSTIADLAVATNCGQIKTGSLARSDRLAKYNQLIRIEEGLGAQALYAGRSAIRQLAGR.

Gln163 serves as a coordination point for (2R)-2-phosphoglycerate. Glu205 (proton donor) is an active-site residue. Residues Asp242, Glu285, and Asp312 each coordinate Mg(2+). The (2R)-2-phosphoglycerate site is built by Lys337, Arg366, Ser367, and Lys388. The Proton acceptor role is filled by Lys337.

It belongs to the enolase family. Requires Mg(2+) as cofactor.

It localises to the cytoplasm. The protein resides in the secreted. It is found in the cell surface. The catalysed reaction is (2R)-2-phosphoglycerate = phosphoenolpyruvate + H2O. Its pathway is carbohydrate degradation; glycolysis; pyruvate from D-glyceraldehyde 3-phosphate: step 4/5. Functionally, catalyzes the reversible conversion of 2-phosphoglycerate (2-PG) into phosphoenolpyruvate (PEP). It is essential for the degradation of carbohydrates via glycolysis. This chain is Enolase, found in Methylorubrum extorquens (strain CM4 / NCIMB 13688) (Methylobacterium extorquens).